We begin with the raw amino-acid sequence, 1311 residues long: Protein PARALOG OF AIPP2 (1311 aa).

Disordered stretches follow at residues 1 to 21, 114 to 141, and 178 to 280; these read MADR…KVES, ISDD…VSAS, and GNKD…EMVE. Residues 213-240 show a composition bias toward basic and acidic residues; that stretch reads NHDDRVSSEKGNFKEKSRPGGNKERQEP. Residues 258–270 show a composition bias toward low complexity; it reads SKSSSSNSSAVSE. Residues 283-334 form a PHD-type zinc finger; the sequence is VKVCDICGDAGREDLLAICSGCSDGAEHTYCMREMLDEVPEGDWLCEECAEE. The Zn(2+) site is built by Cys-286, Cys-289, Cys-301, Cys-304, His-310, Cys-313, Cys-328, and Cys-331. A coiled-coil region spans residues 328–348; sequence CEECAEEAEKQKQEAKRKRET. Disordered regions lie at residues 369–390, 411–440, 460–701, 975–1050, 1059–1078, 1087–1138, 1152–1186, and 1249–1311; these read PDAK…ILPR, NHQT…FLKS, HPRQ…EDLN, TNPQ…PSKK, EAGV…GDSL, EQEL…NPAN, NDGL…GIMK, and LSRS…DLPR. Residues 411 to 431 are compositionally biased toward polar residues; it reads NHQTSFSDDTESARSAGSQLQ. A compositionally biased stretch (basic and acidic residues) spans 460–472; the sequence is HPRQKTGKEDTAL. Residues 487-502 are compositionally biased toward polar residues; it reads PSRTTDAGNSGGSDSQ. Residues 512–528 are compositionally biased toward basic and acidic residues; it reads HSQEGKSLKQVKDRNRE. The segment covering 529 to 552 has biased composition (polar residues); that stretch reads ANASASSIDQKLKSRGNSSVSHAN. A compositionally biased stretch (basic and acidic residues) spans 553 to 566; the sequence is NNRDLKGLQSDGKR. Residues 569 to 607 show a composition bias toward polar residues; it reads LTKQVSNLSRNRLENSVVSGGDISTNEKCSASEQSSSQA. Residues 640 to 653 show a composition bias toward basic and acidic residues; it reads VPREVGKKSKEAFS. Polar residues-rich tracts occupy residues 668 to 694, 977 to 988, and 1014 to 1025; these read PSSQ…STTK, PQKNTSLPTSNV, and LRESSSNGIETR. Residues 1026–1050 are compositionally biased toward basic and acidic residues; the sequence is NGTDARSHENPNNRESSIERSPSKK. The segment covering 1087-1096 has biased composition (basic and acidic residues); that stretch reads EQELGGRKDL. The span at 1250–1263 shows a compositional bias: polar residues; sequence SRSSNSGEQSNNSM. The stretch at 1256–1276 forms a coiled coil; it reads GEQSNNSMNKEKQKADEEEED. Positions 1280 to 1289 are enriched in low complexity; the sequence is VAASLSLSLS.

As to quaternary structure, part of the BAH-PHD bivalent histone reader complex that contains AIPP2, PAIPP2 and AIPP3/BDT1; the BAH-PHD module associates with CPL2 to form the BAH-PHD-CPL2 complex (BPC) for transcriptional repression. Binds directly to AIPP3/BDT1 and CPL2, but not to AIPP2. Expressed ubiquitously.

Together with AIPP2 and AIPP3/BDT1, cooperates to form a BAH-PHD bivalent histone reader complex able to read histone H3 lysine 27 trimethylation (H3K27me3) and low-methylated H3K4 histone marks in order to regulate transcription, especially to prevent early flowering; promotes AIPP3/BDT1 binding to H3K27me3. CPL2 is subsequently recruited to form a BAH-PHD-CPL2 complex (BPC) in order to silence several H3K27me3 and low-methylated H3K4 enriched loci, including AGO5, via the phosphorylation state-dependent inhibition of Pol II release from the transcriptional start site (e.g. Ser5P-Pol II dephosphorylation). The BPC complex represses flowering by inhibiting the expression of several genes, including AGL6, FT, FUL and SOC1. The protein is Protein PARALOG OF AIPP2 of Arabidopsis thaliana (Mouse-ear cress).